A 312-amino-acid chain; its full sequence is Zinc-finger homeodomain protein 9 (312 aa).

The tract at residues 1 to 27 is disordered; the sequence is MLEVRSMDMTPKSPEPESETPTRIQPA. S13 is subject to Phosphoserine. Residues 52–103 form a ZF-HD dimerization-type; degenerate zinc finger; the sequence is YKECLKNHAAAIGGHALDGCGEFMPSPSSTPSDPTSLKCAACGCHRNFHRRE. 2 disordered regions span residues 128–155 and 253–312; these read QPHH…PPPI and FSGG…SSSS. Residues 136–155 show a composition bias toward pro residues; that stretch reads PPPLAPPLPRSPNSSSPPPI. Residues 192–255 constitute a DNA-binding region (homeobox); it reads RKRFRTKFSS…NNKNSFKFSG (64 aa). S273 is modified (phosphoserine).

As to quaternary structure, homo- and heterodimer with other ZFHD proteins. Interacts with MIF3; this interaction prevents nuclear localization and DNA-binding to inhibit transcription regulation activity. Binds to ZHD1, ZHD2 and ZHD11. As to expression, mostly expressed in flowers, stems and inflorescence and, to a lower extent, in leaves and stems.

Its subcellular location is the nucleus. Putative transcription factor. This chain is Zinc-finger homeodomain protein 9 (ZHD9), found in Arabidopsis thaliana (Mouse-ear cress).